The primary structure comprises 513 residues: Interferon alpha/beta receptor 2 (513 aa).

The first 21 residues, Met1–Ala21, serve as a signal peptide directing secretion. Topologically, residues Ser22–Ala242 are extracellular. 2 disulfides stabilise this stretch: Cys39–Cys123 and Cys85–Cys93. 5 N-linked (GlcNAc...) asparagine glycosylation sites follow: Asn42, Asn58, Asn65, Asn78, and Asn84. N-linked (GlcNAc...) asparagine glycosylation is found at Asn149, Asn191, and Asn195. Cys210 and Cys227 form a disulfide bridge. The helical transmembrane segment at Ile243–Leu263 threads the bilayer. Over Lys264–Arg513 the chain is Cytoplasmic. Positions Gly334–Lys402 are disordered. Phosphotyrosine is present on Tyr335. The span at Pro344–Ser354 shows a compositional bias: polar residues. Positions Gly377–Gly389 are enriched in low complexity. Ser403 carries the phosphoserine modification. The tract at residues Gly421–Ser444 is mediates interaction with STAT2 (and required for the recruitment of USP18). Phosphoserine is present on residues Ser448 and Ser465. The tract at residues Glu458–Arg513 is disordered. Position 510 is a phosphotyrosine (Tyr510).

It belongs to the type II cytokine receptor family. In terms of assembly, heterodimer with IFNAR1; forming the receptor for type I interferon. Interacts with the transcriptional factors STAT1 and STAT2. Interacts with JAK1. Interacts with USP18; indirectly via STAT2, it negatively regulates the assembly of the ternary interferon-IFNAR1-IFNAR2 complex and therefore type I interferon signaling. Phosphorylated on tyrosine residues upon interferon binding. Phosphorylation at Tyr-335 or Tyr-510 are sufficient to mediate interferon dependent activation of STAT1, STAT2 and STAT3 leading to antiproliferative effects on many different cell types. As to expression, widely expressed. Detected in liver, testis, kidney, salivary gland, thymus, brain, lung and placenta. Isoform 1, isoform 2 and isoform 3 are expressed in brain.

The protein resides in the cell membrane. Its subcellular location is the secreted. Together with IFNAR1, forms the heterodimeric receptor for type I interferons (including interferons alpha, beta, epsilon, omega and kappa). Type I interferon binding activates the JAK-STAT signaling cascade, resulting in transcriptional activation or repression of interferon-regulated genes that encode the effectors of the interferon response. Mechanistically, type I interferon-binding brings the IFNAR1 and IFNAR2 subunits into close proximity with one another, driving their associated Janus kinases (JAKs) (TYK2 bound to IFNAR1 and JAK1 bound to IFNAR2) to cross-phosphorylate one another. The activated kinases phosphorylate specific tyrosine residues on the intracellular domains of IFNAR1 and IFNAR2, forming docking sites for the STAT transcription factors (STAT1, STAT2 and STAT). STAT proteins are then phosphorylated by the JAKs, promoting their translocation into the nucleus to regulate expression of interferon-regulated genes. Its function is as follows. May be potent inhibitors of type I IFN receptor activity. The sequence is that of Interferon alpha/beta receptor 2 (Ifnar2) from Mus musculus (Mouse).